A 197-amino-acid chain; its full sequence is Ribonuclease HII (197 aa).

Residues 11-197 form the RNase H type-2 domain; the sequence is HLIAGVDEVG…FAPVKKILGL (187 aa). Positions 17, 18, and 109 each coordinate a divalent metal cation.

It belongs to the RNase HII family. The cofactor is Mn(2+). Mg(2+) serves as cofactor.

The protein resides in the cytoplasm. It carries out the reaction Endonucleolytic cleavage to 5'-phosphomonoester.. Functionally, endonuclease that specifically degrades the RNA of RNA-DNA hybrids. The protein is Ribonuclease HII of Actinobacillus pleuropneumoniae serotype 7 (strain AP76).